A 1168-amino-acid polypeptide reads, in one-letter code: DNA-directed RNA polymerase subunit beta (1168 aa).

This sequence belongs to the RNA polymerase beta chain family. As to quaternary structure, the RNAP catalytic core consists of 2 alpha, 1 beta, 1 beta' and 1 omega subunit. When a sigma factor is associated with the core the holoenzyme is formed, which can initiate transcription.

It catalyses the reaction RNA(n) + a ribonucleoside 5'-triphosphate = RNA(n+1) + diphosphate. DNA-dependent RNA polymerase catalyzes the transcription of DNA into RNA using the four ribonucleoside triphosphates as substrates. The sequence is that of DNA-directed RNA polymerase subunit beta from Rhodococcus opacus (strain B4).